The following is a 209-amino-acid chain: Probable glutathione peroxidase 8 (209 aa).

M1 carries the N-acetylmethionine modification. A helical membrane pass occupies residues 18–40 (VFAVLLSIVLCTVTLFLLQLKFL). C79 is an active-site residue.

Belongs to the glutathione peroxidase family.

The protein localises to the membrane. It carries out the reaction 2 glutathione + H2O2 = glutathione disulfide + 2 H2O. The sequence is that of Probable glutathione peroxidase 8 (GPX8) from Homo sapiens (Human).